A 156-amino-acid polypeptide reads, in one-letter code: Small ribosomal subunit protein uS7 (156 aa).

Belongs to the universal ribosomal protein uS7 family. Part of the 30S ribosomal subunit. Contacts proteins S9 and S11.

Functionally, one of the primary rRNA binding proteins, it binds directly to 16S rRNA where it nucleates assembly of the head domain of the 30S subunit. Is located at the subunit interface close to the decoding center, probably blocks exit of the E-site tRNA. The chain is Small ribosomal subunit protein uS7 from Herminiimonas arsenicoxydans.